Reading from the N-terminus, the 376-residue chain is Tetraacyldisaccharide 4'-kinase (376 aa).

51-58 (AVGGTGKT) contacts ATP.

Belongs to the LpxK family.

The catalysed reaction is a lipid A disaccharide + ATP = a lipid IVA + ADP + H(+). It functions in the pathway glycolipid biosynthesis; lipid IV(A) biosynthesis; lipid IV(A) from (3R)-3-hydroxytetradecanoyl-[acyl-carrier-protein] and UDP-N-acetyl-alpha-D-glucosamine: step 6/6. Its function is as follows. Transfers the gamma-phosphate of ATP to the 4'-position of a tetraacyldisaccharide 1-phosphate intermediate (termed DS-1-P) to form tetraacyldisaccharide 1,4'-bis-phosphate (lipid IVA). In Bacteroides fragilis (strain YCH46), this protein is Tetraacyldisaccharide 4'-kinase.